Here is a 427-residue protein sequence, read N- to C-terminus: MSAIVDIIGREILDSRGNPTVECDVLLESGTMGRAAVPSGASTGSREAIELRDGEAGRYGGKGVLKAVEHINTEISEAIMGLDASEQAFLDKTLLELDGTDNKSRLGANAMLAVSMAVAKAAAEEAGLPLYRYFGGSGAMQLPVPMMNIVNGGAHANNSLDIQEFMIVPVSQPTFREALRCGAEVFHALKKILGDRGMSTAVGDEGGFAPNFGSNDECLSTILQAIEKAGYRAGEDVLLALDCAASEFYHDGKYQLAGEGLQLSSAEFTDYLATLADKFPIVSIEDGMHEGDWDGWKLLTERLGKKVQLVGDDLFVTNTRILKEGIEKGIANSILIKINQIGTLTETFAAIEMAKRARYTAVISHRSGETEDSTIADIAVGLNAGQIKTGSLSRSDRISKYNQLLRIEEDLGDIASYPGKSAFYNLR.

Gln163 lines the (2R)-2-phosphoglycerate pocket. Residue Glu205 is the Proton donor of the active site. Mg(2+)-binding residues include Asp242, Glu285, and Asp312. Lys337, Arg366, Ser367, and Lys388 together coordinate (2R)-2-phosphoglycerate. Lys337 acts as the Proton acceptor in catalysis.

This sequence belongs to the enolase family. Requires Mg(2+) as cofactor.

Its subcellular location is the cytoplasm. The protein localises to the secreted. It is found in the cell surface. It carries out the reaction (2R)-2-phosphoglycerate = phosphoenolpyruvate + H2O. Its pathway is carbohydrate degradation; glycolysis; pyruvate from D-glyceraldehyde 3-phosphate: step 4/5. In terms of biological role, catalyzes the reversible conversion of 2-phosphoglycerate (2-PG) into phosphoenolpyruvate (PEP). It is essential for the degradation of carbohydrates via glycolysis. In Burkholderia mallei (strain NCTC 10247), this protein is Enolase.